The following is a 431-amino-acid chain: Ubiquitin-like modifier-activating enzyme 5 (431 aa).

ATP-binding residues include Gly92, Asp113, Lys136, Asn159, and Asn197. Residues Cys239 and Cys242 each contribute to the Zn(2+) site. Cys263 acts as the Glycyl thioester intermediate in catalysis. Zn(2+) contacts are provided by Cys316 and Cys321. Residues 339-396 form a disordered region; it reads AKAKMEADASTTIDEGPLHDDNEWNISVVDDENEKDTTKAASSSDTLPEGLTRELPVA.

The protein belongs to the ubiquitin-activating E1 family. UBA5 subfamily.

In terms of biological role, E1-like enzyme which activates UFM1. This chain is Ubiquitin-like modifier-activating enzyme 5, found in Arabidopsis thaliana (Mouse-ear cress).